The chain runs to 417 residues: D-amino acid dehydrogenase (417 aa).

3 to 17 (VVILGSGVVGVSTAW) is a binding site for FAD.

This sequence belongs to the DadA oxidoreductase family. It depends on FAD as a cofactor.

The enzyme catalyses a D-alpha-amino acid + A + H2O = a 2-oxocarboxylate + AH2 + NH4(+). Its pathway is amino-acid degradation; D-alanine degradation; NH(3) and pyruvate from D-alanine: step 1/1. Its function is as follows. Oxidative deamination of D-amino acids. In Pectobacterium carotovorum subsp. carotovorum (strain PC1), this protein is D-amino acid dehydrogenase.